The sequence spans 193 residues: MQELEERIQSEGTVKEGDVLKVDAFLNHQCDVRLFDRMGSAWAAHFAGKHITKILTIEASGIGIACVAAQHFGNVPVVFAKKAQSINLDGDQYTTTVYSFTKQKEFPVIVAKKYLNAGDHVLLIDDFLANGKALRGLINLCEAAGATVEGIGIAVEKGFQGGGDTLRAEGYDVDSLAIVESMNPETGEITFRH.

The xanthine site is built by leucine 20 and asparagine 27. 129–133 (ANGKA) serves as a coordination point for 5-phospho-alpha-D-ribose 1-diphosphate. Lysine 157 contacts xanthine.

Belongs to the purine/pyrimidine phosphoribosyltransferase family. Xpt subfamily. Homodimer.

It localises to the cytoplasm. The catalysed reaction is XMP + diphosphate = xanthine + 5-phospho-alpha-D-ribose 1-diphosphate. The protein operates within purine metabolism; XMP biosynthesis via salvage pathway; XMP from xanthine: step 1/1. Its function is as follows. Converts the preformed base xanthine, a product of nucleic acid breakdown, to xanthosine 5'-monophosphate (XMP), so it can be reused for RNA or DNA synthesis. The chain is Xanthine phosphoribosyltransferase from Bifidobacterium longum subsp. infantis (strain ATCC 15697 / DSM 20088 / JCM 1222 / NCTC 11817 / S12).